The sequence spans 139 residues: Large-conductance mechanosensitive channel 1 (139 aa).

The next 3 membrane-spanning stretches (helical) occupy residues 8–28 (FISK…AAFG), 30–50 (IVDS…FGGL), and 81–101 (GSFI…FLMV).

The protein belongs to the MscL family. In terms of assembly, homopentamer.

The protein localises to the cell inner membrane. Channel that opens in response to stretch forces in the membrane lipid bilayer. May participate in the regulation of osmotic pressure changes within the cell. The chain is Large-conductance mechanosensitive channel 1 from Mesorhizobium japonicum (strain LMG 29417 / CECT 9101 / MAFF 303099) (Mesorhizobium loti (strain MAFF 303099)).